A 55-amino-acid chain; its full sequence is ATP synthase protein 8 (55 aa).

The helical transmembrane segment at 7–28 (ISWFFNFLLAWFFLFIVVTILL) threads the bilayer.

Belongs to the ATPase protein 8 family. In terms of assembly, F-type ATPases have 2 components, CF(1) - the catalytic core - and CF(0) - the membrane proton channel.

Its subcellular location is the mitochondrion membrane. Its function is as follows. Mitochondrial membrane ATP synthase (F(1)F(0) ATP synthase or Complex V) produces ATP from ADP in the presence of a proton gradient across the membrane which is generated by electron transport complexes of the respiratory chain. F-type ATPases consist of two structural domains, F(1) - containing the extramembraneous catalytic core and F(0) - containing the membrane proton channel, linked together by a central stalk and a peripheral stalk. During catalysis, ATP synthesis in the catalytic domain of F(1) is coupled via a rotary mechanism of the central stalk subunits to proton translocation. Part of the complex F(0) domain. Minor subunit located with subunit a in the membrane. The polypeptide is ATP synthase protein 8 (MT-ATP8) (Pisaster ochraceus (Ochre sea star)).